The chain runs to 429 residues: 5-methylthioadenosine/S-adenosylhomocysteine deaminase (429 aa).

Zn(2+)-binding residues include His66 and His68. Glu95, Arg147, Arg158, and His181 together coordinate substrate. A Zn(2+)-binding site is contributed by His208. Substrate is bound by residues Glu211 and Asp296. Asp296 serves as a coordination point for Zn(2+).

This sequence belongs to the metallo-dependent hydrolases superfamily. MTA/SAH deaminase family. It depends on Zn(2+) as a cofactor.

It catalyses the reaction S-adenosyl-L-homocysteine + H2O + H(+) = S-inosyl-L-homocysteine + NH4(+). It carries out the reaction S-methyl-5'-thioadenosine + H2O + H(+) = S-methyl-5'-thioinosine + NH4(+). In terms of biological role, catalyzes the deamination of 5-methylthioadenosine and S-adenosyl-L-homocysteine into 5-methylthioinosine and S-inosyl-L-homocysteine, respectively. Is also able to deaminate adenosine. The polypeptide is 5-methylthioadenosine/S-adenosylhomocysteine deaminase (Caldicellulosiruptor saccharolyticus (strain ATCC 43494 / DSM 8903 / Tp8T 6331)).